The sequence spans 251 residues: GTP cyclohydrolase FolE2 (251 aa).

It belongs to the GTP cyclohydrolase IV family.

It catalyses the reaction GTP + H2O = 7,8-dihydroneopterin 3'-triphosphate + formate + H(+). The protein operates within cofactor biosynthesis; 7,8-dihydroneopterin triphosphate biosynthesis; 7,8-dihydroneopterin triphosphate from GTP: step 1/1. In terms of biological role, converts GTP to 7,8-dihydroneopterin triphosphate. The polypeptide is GTP cyclohydrolase FolE2 (Desulfotalea psychrophila (strain LSv54 / DSM 12343)).